A 61-amino-acid chain; its full sequence is Photosystem II reaction center protein K (61 aa).

Residues 1-24 (MLNIFSLICICLHSTLYSSSFFLA) constitute a propeptide that is removed on maturation. Residues 36–56 (IVDFMPVIPLLFFLLAFVWQA) form a helical membrane-spanning segment.

Belongs to the PsbK family. As to quaternary structure, PSII is composed of 1 copy each of membrane proteins PsbA, PsbB, PsbC, PsbD, PsbE, PsbF, PsbH, PsbI, PsbJ, PsbK, PsbL, PsbM, PsbT, PsbX, PsbY, PsbZ, Psb30/Ycf12, at least 3 peripheral proteins of the oxygen-evolving complex and a large number of cofactors. It forms dimeric complexes.

Its subcellular location is the plastid. It is found in the chloroplast thylakoid membrane. One of the components of the core complex of photosystem II (PSII). PSII is a light-driven water:plastoquinone oxidoreductase that uses light energy to abstract electrons from H(2)O, generating O(2) and a proton gradient subsequently used for ATP formation. It consists of a core antenna complex that captures photons, and an electron transfer chain that converts photonic excitation into a charge separation. The protein is Photosystem II reaction center protein K of Eucalyptus globulus subsp. globulus (Tasmanian blue gum).